The chain runs to 123 residues: CD59A glycoprotein (123 aa).

Positions 1–23 (MRAQRGLILLLLLLAVFCSTAVS) are cleaved as a signal peptide. In terms of domain architecture, UPAR/Ly6 spans 24–96 (LTCYHCFQPV…CCQFNLCNKS (73 aa)). 5 disulfide bridges follow: cysteine 26-cysteine 50, cysteine 29-cysteine 37, cysteine 43-cysteine 63, cysteine 69-cysteine 87, and cysteine 88-cysteine 93. Residue asparagine 40 is glycosylated (N-linked (GlcNAc...) asparagine). N-linked (GlcNAc...) asparagine glycosylation is present at asparagine 94. Residues 97 to 123 (DGSLGKTPLLGTSVLVAILNLCFLSHL) constitute a propeptide, removed in mature form.

As to quaternary structure, interacts with T-cell surface antigen CD2. In terms of processing, N- and O-glycosylated. In terms of tissue distribution, expressed in all tissues examined (liver, kidney, spleen, thymus, brain and heart). Low levels in thymus. Also expressed in mononuclear cells, erythrocytes and platelets. Barely detected in neutrophils.

The protein localises to the cell membrane. It localises to the secreted. In terms of biological role, potent inhibitor of the complement membrane attack complex (MAC) action, which protects self-cells from damage during complement activation. Acts by binding to the beta-haipins of C8 (C8A and C8B) components of the assembling MAC, forming an intermolecular beta-sheet that prevents incorporation of the multiple copies of C9 required for complete formation of the osmolytic pore. In Mus musculus (Mouse), this protein is CD59A glycoprotein.